The following is a 479-amino-acid chain: Anaerobic nitric oxide reductase flavorubredoxin (479 aa).

Positions 30-210 are zinc metallo-hydrolase; sequence LRGSSYNSYL…PFSRLVTPKI (181 aa). Residues His79, Glu81, Asp83, His147, Asp166, and His227 each coordinate Fe cation. The 140-residue stretch at 254–393 folds into the Flavodoxin-like domain; it reads ITIFYDTMSN…LCRQHGRDIA (140 aa). FMN-binding positions include 260 to 264 and 342 to 369; these read TMSNN and AFGS…EMSL. One can recognise a Rubredoxin-like domain in the interval 423–474; sequence GPKMQCSVCQWIYDPALGEPLQDVAPGTPWSEVPDNFLCPECSLGKDVFDVL. Residues Cys428, Cys431, Cys461, and Cys464 each coordinate Fe cation.

The protein in the N-terminal section; belongs to the zinc metallo-hydrolase group 3 family. As to quaternary structure, homotetramer. It depends on Fe cation as a cofactor. FMN is required as a cofactor.

The protein localises to the cytoplasm. Its pathway is nitrogen metabolism; nitric oxide reduction. Functionally, anaerobic nitric oxide reductase; uses NADH to detoxify nitric oxide (NO), protecting several 4Fe-4S NO-sensitive enzymes. Has at least 2 reductase partners, only one of which (NorW, flavorubredoxin reductase) has been identified. NO probably binds to the di-iron center; electrons enter from the NorW at rubredoxin and are transferred sequentially to the FMN center and the di-iron center. Also able to function as an aerobic oxygen reductase. This is Anaerobic nitric oxide reductase flavorubredoxin from Salmonella paratyphi A (strain ATCC 9150 / SARB42).